The following is a 124-amino-acid chain: Large ribosomal subunit protein mL52 (124 aa).

The N-terminal 23 residues, 1–23 (MAALGMLLSTGVRRLHCGSAARA), are a transit peptide targeting the mitochondrion. Residues 99 to 124 (LQEEKRKQQNALKPKGVLLQNPGPSQ) form a disordered region.

The protein belongs to the mitochondrion-specific ribosomal protein mL52 family. Component of the mitochondrial ribosome large subunit (39S) which comprises a 16S rRNA and about 50 distinct proteins.

The protein resides in the mitochondrion. This is Large ribosomal subunit protein mL52 (MRPL52) from Bos taurus (Bovine).